The primary structure comprises 229 residues: Large ribosomal subunit protein uL1 (229 aa).

The protein belongs to the universal ribosomal protein uL1 family. Part of the 50S ribosomal subunit.

Binds directly to 23S rRNA. The L1 stalk is quite mobile in the ribosome, and is involved in E site tRNA release. In terms of biological role, protein L1 is also a translational repressor protein, it controls the translation of the L11 operon by binding to its mRNA. This is Large ribosomal subunit protein uL1 from Magnetococcus marinus (strain ATCC BAA-1437 / JCM 17883 / MC-1).